Reading from the N-terminus, the 169-residue chain is Large ribosomal subunit protein uL10 (169 aa).

This sequence belongs to the universal ribosomal protein uL10 family. As to quaternary structure, part of the ribosomal stalk of the 50S ribosomal subunit. The N-terminus interacts with L11 and the large rRNA to form the base of the stalk. The C-terminus forms an elongated spine to which L12 dimers bind in a sequential fashion forming a multimeric L10(L12)X complex.

In terms of biological role, forms part of the ribosomal stalk, playing a central role in the interaction of the ribosome with GTP-bound translation factors. The protein is Large ribosomal subunit protein uL10 of Rickettsia akari (strain Hartford).